Reading from the N-terminus, the 371-residue chain is Putative transport protein YtvI (371 aa).

9 consecutive transmembrane segments (helical) span residues 6–26, 30–50, 65–85, 168–188, 225–245, 256–276, 283–303, 312–332, and 334–354; these read ITIF…IAAA, FPLT…HPVV, VLGV…ILVA, FFAL…ATFF, GFIK…FIGL, IAFL…SVFV, SITG…VVLI, ILSK…FAGF, and LFGF…QAFI.

Belongs to the autoinducer-2 exporter (AI-2E) (TC 2.A.86) family.

Its subcellular location is the cell membrane. The polypeptide is Putative transport protein YtvI (ytvI) (Bacillus subtilis (strain 168)).